We begin with the raw amino-acid sequence, 545 residues long: Glucose-6-phosphate isomerase (545 aa).

The active-site Proton donor is the E351. Residues H382 and K510 contribute to the active site.

Belongs to the GPI family.

The protein resides in the cytoplasm. The catalysed reaction is alpha-D-glucose 6-phosphate = beta-D-fructose 6-phosphate. Its pathway is carbohydrate biosynthesis; gluconeogenesis. The protein operates within carbohydrate degradation; glycolysis; D-glyceraldehyde 3-phosphate and glycerone phosphate from D-glucose: step 2/4. Functionally, catalyzes the reversible isomerization of glucose-6-phosphate to fructose-6-phosphate. This chain is Glucose-6-phosphate isomerase, found in Shewanella sp. (strain ANA-3).